The following is a 446-amino-acid chain: MADQDLYSGSSETTEGRVFTVTGQDWDSIAEGLAEDEAQERIVVNMGPQHPSTHGVLRLILELEGETVTEARAGIGYLHTGIEKNMEYRTWTQGVTFCTRMDYLSPFFNEMTYVLGIERLLDIEDRVPEKAQVMRVLLMELNRISSHLVAIATGGMELGALTVMTIGFRERELVLDLFELITGLRMNHAFIRPGGVAQDMPPGALDEIRGFVALMKKRLPEYADLCNANPIFKGRLEGIGHLDLAGCLALGLTGPVLRSTGYPWDLRKTQPYCGYETYDFDVQTWDTSDSYGRFRIRLNEMWESLRIIEQAADRLAGLDGAPVMIEDKKIGWPSQLAIGSDGMGNSLDHIRHIMGESMEALIHHFKLVTEGFRVPPGQAYVPVESPRGELGAHVVSDGGTRPFRAHFRDPSFTNLQATSVMAEGGMVADVIVAIASIDPVMGGVDR.

The protein belongs to the complex I 49 kDa subunit family. NDH-1 is composed of 14 different subunits. Subunits NuoB, C, D, E, F, and G constitute the peripheral sector of the complex.

It is found in the cell membrane. The enzyme catalyses a quinone + NADH + 5 H(+)(in) = a quinol + NAD(+) + 4 H(+)(out). NDH-1 shuttles electrons from NADH, via FMN and iron-sulfur (Fe-S) centers, to quinones in the respiratory chain. The immediate electron acceptor for the enzyme in this species is believed to be a menaquinone. Couples the redox reaction to proton translocation (for every two electrons transferred, four hydrogen ions are translocated across the cytoplasmic membrane), and thus conserves the redox energy in a proton gradient. The chain is NADH-quinone oxidoreductase subunit D from Nocardioides sp. (strain ATCC BAA-499 / JS614).